A 108-amino-acid polypeptide reads, in one-letter code: TYRO protein tyrosine kinase-binding protein (108 aa).

Positions 1 to 25 (MEGLRPSDRLLSLLLTVGGLSLVLA) are cleaved as a signal peptide. Topologically, residues 26 to 36 (QSECNCSSVSP) are extracellular. The helical transmembrane segment at 37 to 57 (GVLAGIVLGDLMLTLLIALAV) threads the bilayer. Asp-46 lines the Ca(2+) pocket. Residues 58 to 108 (YYLGRLVPRGRGATEVTRKQHIPETESPYQELQGQRTDVYSDLNTQRPYYK) are Cytoplasmic-facing. The tract at residues 71–108 (TEVTRKQHIPETESPYQELQGQRTDVYSDLNTQRPYYK) is disordered. The 29-residue stretch at 75-103 (RKQHIPETESPYQELQGQRTDVYSDLNTQ) folds into the ITAM domain. The span at 84-108 (SPYQELQGQRTDVYSDLNTQRPYYK) shows a compositional bias: polar residues. 2 positions are modified to phosphotyrosine: Tyr-86 and Tyr-97.

It belongs to the TYROBP family. As to quaternary structure, homodimer; disulfide-linked. Homotrimer; disulfide-linked. Homotetramer; disulfide-linked. Homotrimers and homotetramers form when low levels of partner receptors are available and is competitive with assembly with interacting receptors. They may represent alternative oligomerization states or may be intermediates in the receptor assembly process. Binding of a metal cation aids in homooligomerization through coordination of the metal ion by the subunits of the oligomer. Interacts with TREM1. Interacts with TREM2. Interacts with CLECSF5. Interacts with CD300LB and CD300C2. Interacts with CD300E. Interacts (via ITAM domain) with SYK (via SH2 domains); activates SYK mediating neutrophils and macrophages integrin-mediated activation. Interacts with KLRC2. Interacts with CD300H. Interacts with KLRD1. Interacts with SIGLEC1. Post-translationally, following ligand binding by associated receptors, tyrosine phosphorylated in the ITAM domain which leads to activation of additional tyrosine kinases and subsequent cell activation.

The protein localises to the cell membrane. In terms of biological role, adapter protein which non-covalently associates with activating receptors found on the surface of a variety of immune cells to mediate signaling and cell activation following ligand binding by the receptors. TYROBP is tyrosine-phosphorylated in the ITAM domain following ligand binding by the associated receptors which leads to activation of additional tyrosine kinases and subsequent cell activation. Also has an inhibitory role in some cells. Non-covalently associates with activating receptors of the CD300 family to mediate cell activation. Also mediates cell activation through association with activating receptors of the CD200R family. Required for neutrophil activation mediated by integrin. Required for the activation of myeloid cells mediated by the CLEC5A/MDL1 receptor. Associates with natural killer (NK) cell receptors such as the KLRD1/KLRC2 heterodimer to mediate NK cell activation. Associates with TREM1 to mediate activation of neutrophils and monocytes. Associates with TREM2 on monocyte-derived dendritic cells to mediate up-regulation of chemokine receptor CCR7 and dendritic cell maturation and survival. Association with TREM2 mediates cytokine-induced formation of multinucleated giant cells which are formed by the fusion of macrophages. Stabilizes the TREM2 C-terminal fragment (TREM2-CTF) produced by TREM2 ectodomain shedding which suppresses the release of pro-inflammatory cytokines. In microglia, required with TREM2 for phagocytosis of apoptotic neurons. Required with ITGAM/CD11B in microglia to control production of microglial superoxide ions which promote the neuronal apoptosis that occurs during brain development. Promotes pro-inflammatory responses in microglia following nerve injury which accelerates degeneration of injured neurons. Positively regulates the expression of the IRAK3/IRAK-M kinase and IL10 production by liver dendritic cells and inhibits their T cell allosimulatory ability. Negatively regulates B cell proliferation. Required for CSF1-mediated osteoclast cytoskeletal organization. Positively regulates multinucleation during osteoclast development. The sequence is that of TYRO protein tyrosine kinase-binding protein from Bos taurus (Bovine).